Here is a 602-residue protein sequence, read N- to C-terminus: MASSSASDCDAHPVERESMRKVSQDGVRQDMSKSGPRLPGESAITDKEVIYICPFSGPVKGRLYITNYRLYLRSLETDLAPILDVPLGVISRIEKMGGVTSRGENSYGLDITCKDLRNLRFALKQEGHSRRDIFDVLTRHAFPLAYNLPLFAFVNEEKFKVDGWAIYNPVEEYRRQGLPDRHWRISFVNQRYELCDTYPALLVVPYRASDDDLRRVATFRSRNRIPVLSWIHPENRAAIMRCSQPLVGVGGKRSRDDERYLDIIRETNKQTSKLTIYDARPGVNAVANKATGGGYEGEDAYPHAELSFLDIHNIHVMRESLRRVRDIVYPHVEEAHWLSSLESTHWLEHIKLLLTGAIRVADKVASGLSSVLVHCSDGWDRTAQLTTLAMLMLDGFYRSIEGFEILVQKEWISFGHKFSSRIGHGDKNHADADRSPIFLQFIDCVWQMTKQFPTAFEFNECFLVAILDHLYSCRFGTFLLNCEAARERQRLAERTVSVWSLINSNKDEFTNPFYARESNRVIYPVTSVRHLELWVNYYIRWNPRIRQQPHPMEQRYNELLALRDDYIKKLEELQLATPTKLTDSSTPPSGSAQIAPRMQTHF.

The segment at 1 to 40 (MASSSASDCDAHPVERESMRKVSQDGVRQDMSKSGPRLPG) is disordered. Residues 9 to 31 (CDAHPVERESMRKVSQDGVRQDM) show a composition bias toward basic and acidic residues. A Phosphoserine modification is found at serine 18. A GRAM domain is found at 28–97 (RQDMSKSGPR…GVISRIEKMG (70 aa)). Residues 163–538 (GWAIYNPVEE…RHLELWVNYY (376 aa)) form the Myotubularin phosphatase domain. Positions 288, 313, and 314 each coordinate a 1,2-diacyl-sn-glycero-3-phospho-(1D-myo-inositol-3,5-bisphosphate). Asparagine 288, asparagine 313, and isoleucine 314 together coordinate a 1,2-diacyl-sn-glycero-3-phospho-(1D-myo-inositol-3-phosphate). Cysteine 375 acts as the Phosphocysteine intermediate in catalysis. Residues serine 376, aspartate 377, glycine 378, tryptophan 379, aspartate 380, arginine 381, lysine 417, and arginine 421 each coordinate a 1,2-diacyl-sn-glycero-3-phospho-(1D-myo-inositol-3,5-bisphosphate). A 1,2-diacyl-sn-glycero-3-phospho-(1D-myo-inositol-3-phosphate) contacts are provided by serine 376, aspartate 377, glycine 378, tryptophan 379, aspartate 380, and arginine 381. Residue arginine 421 participates in a 1,2-diacyl-sn-glycero-3-phospho-(1D-myo-inositol-3-phosphate) binding. Threonine 495 bears the Phosphothreonine mark. Polar residues predominate over residues 578 to 592 (PTKLTDSSTPPSGSA). The interval 578–602 (PTKLTDSSTPPSGSAQIAPRMQTHF) is disordered.

It belongs to the protein-tyrosine phosphatase family. Non-receptor class myotubularin subfamily. In terms of assembly, heterodimer with MTMR12. Interacts with KMT2A/MLL1 (via SET domain). Interacts with DES in skeletal muscle but not in cardiac muscle. Interacts with SPEG.

The protein resides in the cytoplasm. The protein localises to the cell membrane. Its subcellular location is the cell projection. It is found in the filopodium. It localises to the ruffle. The protein resides in the late endosome. The protein localises to the myofibril. Its subcellular location is the sarcomere. It carries out the reaction a 1,2-diacyl-sn-glycero-3-phospho-(1D-myo-inositol-3-phosphate) + H2O = a 1,2-diacyl-sn-glycero-3-phospho-(1D-myo-inositol) + phosphate. The enzyme catalyses a 1,2-diacyl-sn-glycero-3-phospho-(1D-myo-inositol-3,5-bisphosphate) + H2O = a 1,2-diacyl-sn-glycero-3-phospho-(1D-myo-inositol-5-phosphate) + phosphate. It catalyses the reaction 1,2-dioctanoyl-sn-glycero-3-phospho-(1-D-myo-inositol-3-phosphate) + H2O = 1,2-dioctanoyl-sn-glycero-3-phospho-(1D-myo-inositol) + phosphate. The catalysed reaction is 1,2-dioctanoyl-sn-glycero-3-phospho-(1D-myo-inositol-3,5-bisphosphate) + H2O = 1,2-dioctanoyl-sn-glycero-3-phospho-(1D-myo-inositol-5-phosphate) + phosphate. It carries out the reaction 1,2-dihexadecanoyl-sn-glycero-3-phospho-(1D-myo-inositol-3,5-phosphate) + H2O = 1,2-dihexadecanoyl-sn-glycero-3-phospho-(1D-myo-inositol-5-phosphate) + phosphate. With respect to regulation, allosterically activated by phosphatidylinositol 5-phosphate (PI5P). In terms of biological role, lipid phosphatase which dephosphorylates phosphatidylinositol 3-monophosphate (PI3P) and phosphatidylinositol 3,5-bisphosphate (PI(3,5)P2). Has also been shown to dephosphorylate phosphotyrosine- and phosphoserine-containing peptides. Negatively regulates EGFR degradation through regulation of EGFR trafficking from the late endosome to the lysosome. Plays a role in vacuolar formation and morphology. Regulates desmin intermediate filament assembly and architecture. Plays a role in mitochondrial morphology and positioning. Required for skeletal muscle maintenance but not for myogenesis. In skeletal muscles, stabilizes MTMR12 protein levels. This is Myotubularin from Rattus norvegicus (Rat).